Reading from the N-terminus, the 529-residue chain is Tyrosinase (529 aa).

Residues 1 to 18 (MFLFAMGLLLVILQPSTG) form the signal peptide. The Lumenal, melanosome portion of the chain corresponds to 19-476 (QFPRVCANTQ…YLKQAHQIWP (458 aa)). N86, N111, and N161 each carry an N-linked (GlcNAc...) asparagine glycan. Cu cation-binding residues include H180, H202, and H211. 2 N-linked (GlcNAc...) asparagine glycosylation sites follow: N230 and N290. The tract at residues 293-313 (SEGPILRNPGNNDKSRTPRLP) is disordered. N-linked (GlcNAc...) asparagine glycans are attached at residues N337 and N356. 2 residues coordinate Cu cation: H363 and H367. An N-linked (GlcNAc...) asparagine glycan is attached at N371. H390 is a binding site for Cu cation. A helical membrane pass occupies residues 477–497 (WLVGAAVIGGIITAVLSGLIL). Over 498-529 (ACRKKRKGTSPEIQPLLTESEDYNNVSYQSHF) the chain is Cytoplasmic.

The protein belongs to the tyrosinase family. Cu(2+) serves as cofactor.

The protein localises to the melanosome membrane. It localises to the melanosome. The catalysed reaction is 2 L-dopa + O2 = 2 L-dopaquinone + 2 H2O. The enzyme catalyses L-tyrosine + O2 = L-dopaquinone + H2O. Functionally, this is a copper-containing oxidase that functions in the formation of pigments such as melanins and other polyphenolic compounds. Catalyzes the initial and rate limiting step in the cascade of reactions leading to melanin production from tyrosine. In addition to hydroxylating tyrosine to DOPA (3,4-dihydroxyphenylalanine), also catalyzes the oxidation of DOPA to DOPA-quinone, and possibly the oxidation of DHI (5,6-dihydroxyindole) to indole-5,6 quinone. The polypeptide is Tyrosinase (TYR) (Gallus gallus (Chicken)).